Reading from the N-terminus, the 73-residue chain is UPF0346 protein Lreu_0775 (73 aa).

Belongs to the UPF0346 family.

The polypeptide is UPF0346 protein Lreu_0775 (Limosilactobacillus reuteri (strain DSM 20016) (Lactobacillus reuteri)).